Reading from the N-terminus, the 110-residue chain is Large ribosomal subunit protein uL22 (110 aa).

Belongs to the universal ribosomal protein uL22 family. In terms of assembly, part of the 50S ribosomal subunit.

Functionally, this protein binds specifically to 23S rRNA; its binding is stimulated by other ribosomal proteins, e.g. L4, L17, and L20. It is important during the early stages of 50S assembly. It makes multiple contacts with different domains of the 23S rRNA in the assembled 50S subunit and ribosome. The globular domain of the protein is located near the polypeptide exit tunnel on the outside of the subunit, while an extended beta-hairpin is found that lines the wall of the exit tunnel in the center of the 70S ribosome. The chain is Large ribosomal subunit protein uL22 from Hydrogenovibrio crunogenus (strain DSM 25203 / XCL-2) (Thiomicrospira crunogena).